The primary structure comprises 398 residues: Inositol polyphosphate 5-phosphatase (398 aa).

It belongs to the inositol 1,4,5-trisphosphate 5-phosphatase type II family. In terms of tissue distribution, expressed in tail, cilia, dendrites, axon and male head.

The protein resides in the cytoplasm. In terms of biological role, dephosphorylates a number of phosphatidylinositols. Controls the cellular levels and subcellular distribution of phosphatidylinositol 3,5-bisphosphate and phosphatidylinositol 3,4,5-trisphosphate. Has a role in sperm activation and motility. Influences the localization of the transient receptor potential polycystin (TRPP) complex proteins lov-1 and pkd-2. In Caenorhabditis elegans, this protein is Inositol polyphosphate 5-phosphatase.